The following is a 530-amino-acid chain: UDP-glucuronosyltransferase 2B17 (530 aa).

An N-terminal signal peptide occupies residues 1–23 (MPGKWISALLLLQISCCFQSGNC). Residues 494 to 510 (VIGFLLTCSAVIAVLTV) form a helical membrane-spanning segment.

This sequence belongs to the UDP-glycosyltransferase family.

It is found in the endoplasmic reticulum membrane. The enzyme catalyses glucuronate acceptor + UDP-alpha-D-glucuronate = acceptor beta-D-glucuronoside + UDP + H(+). It carries out the reaction 17alpha-estradiol + UDP-alpha-D-glucuronate = 17alpha-estradiol 3-O-(beta-D-glucuronate) + UDP + H(+). It catalyses the reaction 17alpha-estradiol + UDP-alpha-D-glucuronate = 17alpha-estradiol 17-O-(beta-D-glucuronate) + UDP + H(+). The catalysed reaction is 17beta-estradiol + UDP-alpha-D-glucuronate = 17beta-estradiol 17-O-(beta-D-glucuronate) + UDP + H(+). The enzyme catalyses 17beta-hydroxy-5alpha-androstan-3-one + UDP-alpha-D-glucuronate = 5alpha-dihydrotestosterone 17-O-(beta-D-glucuronate) + UDP + H(+). It carries out the reaction testosterone + UDP-alpha-D-glucuronate = testosterone 17-O-(beta-D-glucuronate) + UDP + H(+). Functionally, UDP-glucuronosyltransferase (UGT) that catalyzes phase II biotransformation reactions in which lipophilic substrates are conjugated with glucuronic acid to increase the metabolite's water solubility, thereby facilitating excretion into either the urine or bile. Catalyzes the glucuronidation of endogenous steroid hormones such as androgens (epitestosterone, androsterone) and estrogens (estradiol, epiestradiol). The polypeptide is UDP-glucuronosyltransferase 2B17 (Rattus norvegicus (Rat)).